Reading from the N-terminus, the 495-residue chain is Cobyric acid synthase (495 aa).

In terms of domain architecture, GATase cobBQ-type spans 256 to 444 (KVNVAVVLLR…VHGILDNPSV (189 aa)). C337 acts as the Nucleophile in catalysis. H436 is an active-site residue.

The protein belongs to the CobB/CobQ family. CobQ subfamily.

The protein operates within cofactor biosynthesis; adenosylcobalamin biosynthesis. Functionally, catalyzes amidations at positions B, D, E, and G on adenosylcobyrinic A,C-diamide. NH(2) groups are provided by glutamine, and one molecule of ATP is hydrogenolyzed for each amidation. This is Cobyric acid synthase from Bacteroides fragilis (strain ATCC 25285 / DSM 2151 / CCUG 4856 / JCM 11019 / LMG 10263 / NCTC 9343 / Onslow / VPI 2553 / EN-2).